Here is a 278-residue protein sequence, read N- to C-terminus: Phosphatidylglycerol--prolipoprotein diacylglyceryl transferase (278 aa).

3 helical membrane passes run 21–41, 54–74, and 88–108; these read WYGI…QASV, IIFW…VIFQ, and IWQG…TGII. Arg136 lines the a 1,2-diacyl-sn-glycero-3-phospho-(1'-sn-glycerol) pocket. Helical transmembrane passes span 176-196, 202-222, and 234-254; these read QPTF…LILL, IGDT…FVEG, and IRIA…IMIV.

The protein belongs to the Lgt family.

Its subcellular location is the cell membrane. It catalyses the reaction L-cysteinyl-[prolipoprotein] + a 1,2-diacyl-sn-glycero-3-phospho-(1'-sn-glycerol) = an S-1,2-diacyl-sn-glyceryl-L-cysteinyl-[prolipoprotein] + sn-glycerol 1-phosphate + H(+). It participates in protein modification; lipoprotein biosynthesis (diacylglyceryl transfer). Functionally, catalyzes the transfer of the diacylglyceryl group from phosphatidylglycerol to the sulfhydryl group of the N-terminal cysteine of a prolipoprotein, the first step in the formation of mature lipoproteins. In Staphylococcus saprophyticus subsp. saprophyticus (strain ATCC 15305 / DSM 20229 / NCIMB 8711 / NCTC 7292 / S-41), this protein is Phosphatidylglycerol--prolipoprotein diacylglyceryl transferase.